The following is a 92-amino-acid chain: Small ribosomal subunit protein uS19c (92 aa).

It belongs to the universal ribosomal protein uS19 family.

The protein localises to the plastid. Functionally, protein S19 forms a complex with S13 that binds strongly to the 16S ribosomal RNA. This chain is Small ribosomal subunit protein uS19c, found in Cuscuta gronovii (Common dodder).